Reading from the N-terminus, the 483-residue chain is Aspartyl/glutamyl-tRNA(Asn/Gln) amidotransferase subunit B (483 aa).

The protein belongs to the GatB/GatE family. GatB subfamily. In terms of assembly, heterotrimer of A, B and C subunits.

It carries out the reaction L-glutamyl-tRNA(Gln) + L-glutamine + ATP + H2O = L-glutaminyl-tRNA(Gln) + L-glutamate + ADP + phosphate + H(+). The enzyme catalyses L-aspartyl-tRNA(Asn) + L-glutamine + ATP + H2O = L-asparaginyl-tRNA(Asn) + L-glutamate + ADP + phosphate + 2 H(+). Allows the formation of correctly charged Asn-tRNA(Asn) or Gln-tRNA(Gln) through the transamidation of misacylated Asp-tRNA(Asn) or Glu-tRNA(Gln) in organisms which lack either or both of asparaginyl-tRNA or glutaminyl-tRNA synthetases. The reaction takes place in the presence of glutamine and ATP through an activated phospho-Asp-tRNA(Asn) or phospho-Glu-tRNA(Gln). This is Aspartyl/glutamyl-tRNA(Asn/Gln) amidotransferase subunit B from Marinobacter nauticus (strain ATCC 700491 / DSM 11845 / VT8) (Marinobacter aquaeolei).